A 554-amino-acid chain; its full sequence is DDB1- and CUL4-associated factor 11 homolog (554 aa).

Residues 24 to 52 form a disordered region; sequence QRMKNRNDSDTDFSDDDEETSGGCPKMTP. Residues 33-43 are compositionally biased toward acidic residues; sequence DTDFSDDDEET. 5 WD repeats span residues 245–284, 288–328, 336–375, 414–458, and 461–500; these read QNQC…RIRT, AHED…DGDV, GHRD…CQGG, GHSV…VSRR, and GHQA…EGVI. The segment at 527 to 554 is disordered; sequence PQRKLRKPISARNAKCPTTSSEPDDFQI.

It belongs to the WD repeat LEC14B family.

Functionally, involved in regulation of lifespan. Required for dopaminergic CEP neuron degeneration in response to Mn(2+). This chain is DDB1- and CUL4-associated factor 11 homolog (wdr-23), found in Caenorhabditis briggsae.